Reading from the N-terminus, the 368-residue chain is 2-aminoethylphosphonate--pyruvate transaminase (368 aa).

Lys-192 carries the N6-(pyridoxal phosphate)lysine modification.

This sequence belongs to the class-V pyridoxal-phosphate-dependent aminotransferase family. PhnW subfamily. Homodimer. It depends on pyridoxal 5'-phosphate as a cofactor.

It carries out the reaction (2-aminoethyl)phosphonate + pyruvate = phosphonoacetaldehyde + L-alanine. In terms of biological role, involved in phosphonate degradation. The protein is 2-aminoethylphosphonate--pyruvate transaminase of Pseudomonas putida (strain ATCC 47054 / DSM 6125 / CFBP 8728 / NCIMB 11950 / KT2440).